Reading from the N-terminus, the 681-residue chain is DNA ligase (681 aa).

NAD(+) contacts are provided by residues 44 to 48 (DYIYD), 94 to 95 (SL), and glutamate 124. Residue lysine 126 is the N6-AMP-lysine intermediate of the active site. NAD(+) contacts are provided by arginine 147, glutamate 181, lysine 297, and lysine 321. Positions 415, 418, 433, and 438 each coordinate Zn(2+). The region spanning 598 to 681 (DETSFFYGKK…EAQAKEGTDK (84 aa)) is the BRCT domain.

It belongs to the NAD-dependent DNA ligase family. LigA subfamily. Requires Mg(2+) as cofactor. Mn(2+) is required as a cofactor.

The catalysed reaction is NAD(+) + (deoxyribonucleotide)n-3'-hydroxyl + 5'-phospho-(deoxyribonucleotide)m = (deoxyribonucleotide)n+m + AMP + beta-nicotinamide D-nucleotide.. Functionally, DNA ligase that catalyzes the formation of phosphodiester linkages between 5'-phosphoryl and 3'-hydroxyl groups in double-stranded DNA using NAD as a coenzyme and as the energy source for the reaction. It is essential for DNA replication and repair of damaged DNA. This is DNA ligase from Leuconostoc citreum (strain KM20).